An 831-amino-acid polypeptide reads, in one-letter code: Cysteine--tRNA ligase, cytoplasmic (831 aa).

The residue at position 2 (Ala2) is an N-acetylalanine. Residue Ser102 is modified to Phosphoserine. Cys138 serves as a coordination point for Zn(2+). Residue Gly139 coordinates L-cysteine. Residues 140 to 150 (PTVYDASHMGH) carry the 'HIGH' region motif. Thr179 provides a ligand contact to L-cysteine. The short motif at 184–187 (KIIR) is the 'KIIK' region element. Phosphoserine occurs at positions 388 and 390. 3 residues coordinate Zn(2+): Cys431, His456, and Glu460. His456 serves as a coordination point for L-cysteine. The short motif at 489–493 (KMSKS) is the 'KMSKS' region element. Residue Lys492 participates in ATP binding. Basic and acidic residues predominate over residues 736 to 762 (GKKRAEEEKRRKKEEAARKKQEQEAAK). Residues 736–766 (GKKRAEEEKRRKKEEAARKKQEQEAAKLAKM) form a disordered region. Ser829 is modified (phosphoserine).

The protein belongs to the class-I aminoacyl-tRNA synthetase family. As to quaternary structure, homodimer. Zn(2+) serves as cofactor.

It is found in the cytoplasm. The enzyme catalyses tRNA(Cys) + L-cysteine + ATP = L-cysteinyl-tRNA(Cys) + AMP + diphosphate. Functionally, catalyzes the ATP-dependent ligation of cysteine to tRNA(Cys). The chain is Cysteine--tRNA ligase, cytoplasmic (Cars1) from Mus musculus (Mouse).